Consider the following 408-residue polypeptide: Imidazolonepropionase (408 aa).

His66 and His68 together coordinate Fe(3+). The Zn(2+) site is built by His66 and His68. Residues Arg75, Tyr138, and His171 each contribute to the 4-imidazolone-5-propanoate site. Position 138 (Tyr138) interacts with N-formimidoyl-L-glutamate. His236 lines the Fe(3+) pocket. Residue His236 coordinates Zn(2+). Gln239 is a binding site for 4-imidazolone-5-propanoate. Asp311 serves as a coordination point for Fe(3+). Residue Asp311 participates in Zn(2+) binding. Residues Asn313 and Gly315 each contribute to the N-formimidoyl-L-glutamate site. A 4-imidazolone-5-propanoate-binding site is contributed by Ser316.

It belongs to the metallo-dependent hydrolases superfamily. HutI family. It depends on Zn(2+) as a cofactor. The cofactor is Fe(3+).

The protein localises to the cytoplasm. It catalyses the reaction 4-imidazolone-5-propanoate + H2O = N-formimidoyl-L-glutamate. It participates in amino-acid degradation; L-histidine degradation into L-glutamate; N-formimidoyl-L-glutamate from L-histidine: step 3/3. Its function is as follows. Catalyzes the hydrolytic cleavage of the carbon-nitrogen bond in imidazolone-5-propanoate to yield N-formimidoyl-L-glutamate. It is the third step in the universal histidine degradation pathway. This chain is Imidazolonepropionase, found in Idiomarina loihiensis (strain ATCC BAA-735 / DSM 15497 / L2-TR).